The chain runs to 132 residues: Ribonuclease P protein component (132 aa).

This sequence belongs to the RnpA family. Consists of a catalytic RNA component (M1 or rnpB) and a protein subunit.

The catalysed reaction is Endonucleolytic cleavage of RNA, removing 5'-extranucleotides from tRNA precursor.. In terms of biological role, RNaseP catalyzes the removal of the 5'-leader sequence from pre-tRNA to produce the mature 5'-terminus. It can also cleave other RNA substrates such as 4.5S RNA. The protein component plays an auxiliary but essential role in vivo by binding to the 5'-leader sequence and broadening the substrate specificity of the ribozyme. The protein is Ribonuclease P protein component of Micrococcus luteus (strain ATCC 4698 / DSM 20030 / JCM 1464 / CCM 169 / CCUG 5858 / IAM 1056 / NBRC 3333 / NCIMB 9278 / NCTC 2665 / VKM Ac-2230) (Micrococcus lysodeikticus).